Here is a 184-residue protein sequence, read N- to C-terminus: MRLVILGGSGSGKSTQAQRLCSHLEITQISTGEILREAISHLSELGRHAQPYMIKGELVPDEMIIELIRLRLKKSDVIDGWVLEGYPRTAFQAEELDFLLDELGQKLDWAIYLQVPEAVMVSRSLGRSLPDDQPEIVQRRVEIFYDRTVPILEYYDRRRRLLTINGDQSPELVLQSILKLLLVT.

Residue glycine 10 to threonine 15 coordinates ATP. The tract at residues serine 30–valine 59 is NMP. AMP-binding positions include threonine 31, arginine 36, glutamate 57–valine 59, glycine 85–arginine 88, and glutamine 92. The interval glycine 126–aspartate 132 is LID. Arginine 127 provides a ligand contact to ATP. AMP is bound at residue arginine 140. Glutamine 168 contributes to the ATP binding site.

Belongs to the adenylate kinase family. In terms of assembly, monomer.

The protein resides in the cytoplasm. The enzyme catalyses AMP + ATP = 2 ADP. It participates in purine metabolism; AMP biosynthesis via salvage pathway; AMP from ADP: step 1/1. Functionally, catalyzes the reversible transfer of the terminal phosphate group between ATP and AMP. Plays an important role in cellular energy homeostasis and in adenine nucleotide metabolism. The polypeptide is Adenylate kinase 2 (Nostoc sp. (strain PCC 7120 / SAG 25.82 / UTEX 2576)).